A 333-amino-acid polypeptide reads, in one-letter code: Protoheme IX farnesyltransferase (333 aa).

8 helical membrane-spanning segments follow: residues 63-83, 109-129, 132-152, 160-180, 188-208, 214-234, 245-265, and 292-312; these read LACT…LNCI, AAFI…VSGV, LAAG…TAIL, IVIG…AASG, WLFS…ALLL, AVGI…RAIS, GFGV…LIPF, and WSIF…LPMA.

It belongs to the UbiA prenyltransferase family. Protoheme IX farnesyltransferase subfamily.

It is found in the cell inner membrane. The enzyme catalyses heme b + (2E,6E)-farnesyl diphosphate + H2O = Fe(II)-heme o + diphosphate. The protein operates within porphyrin-containing compound metabolism; heme O biosynthesis; heme O from protoheme: step 1/1. In terms of biological role, converts heme B (protoheme IX) to heme O by substitution of the vinyl group on carbon 2 of heme B porphyrin ring with a hydroxyethyl farnesyl side group. This chain is Protoheme IX farnesyltransferase, found in Prochlorococcus marinus (strain MIT 9313).